We begin with the raw amino-acid sequence, 387 residues long: ATP phosphoribosyltransferase regulatory subunit (387 aa).

This sequence belongs to the class-II aminoacyl-tRNA synthetase family. HisZ subfamily. As to quaternary structure, heteromultimer composed of HisG and HisZ subunits.

The protein localises to the cytoplasm. The protein operates within amino-acid biosynthesis; L-histidine biosynthesis; L-histidine from 5-phospho-alpha-D-ribose 1-diphosphate: step 1/9. Functionally, required for the first step of histidine biosynthesis. May allow the feedback regulation of ATP phosphoribosyltransferase activity by histidine. The chain is ATP phosphoribosyltransferase regulatory subunit from Polynucleobacter necessarius subsp. necessarius (strain STIR1).